The sequence spans 418 residues: Caveolae-associated protein 2 (418 aa).

Residues 1-42 (MGEDAAQAEKFQHPNTDMLQEKPSSPSPMPSSTPSPSLNLGS) are disordered. The residue at position 2 (glycine 2) is an N-acetylglycine. The segment at 2–168 (GEDAAQAEKF…IFQEESEIPA (167 aa)) is interaction with CAVIN1. Residues serine 27, serine 35, serine 37, and serine 51 each carry the phosphoserine modification. Coiled-coil stretches lie at residues 61 to 87 (LLDK…INLE) and 126 to 268 (RAVR…VERR). The segment at 62–100 (LDKLVNMLDAVRENQHNMEQRQINLEGSVKGIQNDLTKL) is leucine-zipper. Residue threonine 196 is modified to Phosphothreonine. Disordered regions lie at residues 200-238 (VDLS…SLKK) and 262-382 (IVSV…ALQQ). A phosphoserine mark is found at serine 203, serine 204, and serine 218. Residues 203-219 (SSDDELPRDEEALEDSA) are compositionally biased toward acidic residues. A compositionally biased stretch (basic and acidic residues) spans 220 to 238 (EEKMEESRAEKIKRSSLKK). Residues 275–287 (LTPNHQKASSGKS) are compositionally biased toward polar residues. Phosphoserine occurs at positions 283, 284, 287, 288, 293, and 296. The span at 303–321 (REGESSVENETKLEDQMQE) shows a compositional bias: basic and acidic residues. Phosphoserine is present on residues serine 327, serine 336, serine 359, and serine 363. Residues 355–366 (RGNNSAVGSNAD) are compositionally biased toward polar residues. Threonine 368 is subject to Phosphothreonine. A compositionally biased stretch (acidic residues) spans 368 to 377 (TIEEDEEEEP). Tyrosine 388 carries the phosphotyrosine modification. A phosphoserine mark is found at serine 390 and serine 396. Positions 396 to 418 (SEEMEEPSEKQVQPAVLHVDQTA) are disordered.

The protein belongs to the CAVIN family. As to quaternary structure, component of the CAVIN complex composed of CAVIN1, CAVIN2, CAVIN3 and CAVIN4. Binds to PRKCA in the presence of phosphatidylserine. Interacts with CAVIN4; this augments the transactivation of NPPA by CAVIN4. Interacts with CAVIN1. Interacts with CAV3. Post-translationally, the N-terminus is blocked. As to expression, heart, adipose tissue, lung and endothelial cells (at protein level). Highly expressed in kidney and expressed at lower levels in liver, spleen, thymus, stomach, intestine and uterus.

The protein resides in the cytoplasm. Its subcellular location is the cytosol. It localises to the membrane. It is found in the caveola. In terms of biological role, plays an important role in caveolar biogenesis and morphology. Regulates caveolae morphology by inducing membrane curvature within caveolae. Plays a role in caveola formation in a tissue-specific manner. Required for the formation of caveolae in the lung and fat endothelia but not in the heart endothelia. Negatively regulates the size or stability of CAVIN complexes in the lung endothelial cells. May play a role in targeting PRKCA to caveolae. This Mus musculus (Mouse) protein is Caveolae-associated protein 2 (Cavin2).